The chain runs to 192 residues: UPF0462 protein C4orf33 homolog (192 aa).

This sequence belongs to the UPF0462 family.

The polypeptide is UPF0462 protein C4orf33 homolog (D3Ertd751e) (Mus musculus (Mouse)).